A 311-amino-acid polypeptide reads, in one-letter code: Pyrimidine-specific ribonucleoside hydrolase RihA (311 aa).

His-240 is a catalytic residue.

This sequence belongs to the IUNH family. RihA subfamily.

Hydrolyzes cytidine or uridine to ribose and cytosine or uracil, respectively. This chain is Pyrimidine-specific ribonucleoside hydrolase RihA, found in Klebsiella pneumoniae (strain 342).